Here is a 146-residue protein sequence, read N- to C-terminus: Small ribosomal subunit protein uS9 (146 aa).

This sequence belongs to the universal ribosomal protein uS9 family. As to quaternary structure, component of the small ribosomal subunit.

The protein resides in the cytoplasm. Functionally, component of the small ribosomal subunit. The ribosome is a large ribonucleoprotein complex responsible for the synthesis of proteins in the cell. This is Small ribosomal subunit protein uS9 (rps16) from Ictalurus punctatus (Channel catfish).